The primary structure comprises 115 residues: Large ribosomal subunit protein bL19 (115 aa).

This sequence belongs to the bacterial ribosomal protein bL19 family.

Functionally, this protein is located at the 30S-50S ribosomal subunit interface and may play a role in the structure and function of the aminoacyl-tRNA binding site. The sequence is that of Large ribosomal subunit protein bL19 from Hydrogenovibrio crunogenus (strain DSM 25203 / XCL-2) (Thiomicrospira crunogena).